A 287-amino-acid chain; its full sequence is Polyamine aminopropyltransferase (287 aa).

Residues 5–238 (ETWHETLHDH…GIMTFAWASQ (234 aa)) enclose the PABS domain. Q33 provides a ligand contact to S-methyl-5'-thioadenosine. 2 residues coordinate spermidine: H64 and D88. Residues E108 and 140–141 (DG) contribute to the S-methyl-5'-thioadenosine site. Catalysis depends on D158, which acts as the Proton acceptor. Residue 158–161 (DCTD) coordinates spermidine. Residue P165 participates in S-methyl-5'-thioadenosine binding.

Belongs to the spermidine/spermine synthase family. Homodimer or homotetramer.

It is found in the cytoplasm. The catalysed reaction is S-adenosyl 3-(methylsulfanyl)propylamine + putrescine = S-methyl-5'-thioadenosine + spermidine + H(+). It participates in amine and polyamine biosynthesis; spermidine biosynthesis; spermidine from putrescine: step 1/1. Functionally, catalyzes the irreversible transfer of a propylamine group from the amino donor S-adenosylmethioninamine (decarboxy-AdoMet) to putrescine (1,4-diaminobutane) to yield spermidine. The sequence is that of Polyamine aminopropyltransferase from Sodalis glossinidius (strain morsitans).